A 104-amino-acid chain; its full sequence is uncharacterized protein (104 aa).

The chain crosses the membrane as a helical span at residues 77 to 98 (IAAVRANIIICACFFYLFCYCS).

Its subcellular location is the membrane. This is an uncharacterized protein from Saccharomyces cerevisiae (strain ATCC 204508 / S288c) (Baker's yeast).